The sequence spans 1271 residues: Protein flightless-1 homolog (1271 aa).

M1 is subject to N-acetylmethionine. An interaction with LRRFIP1 and LRRFIP2 region spans residues 1 to 427 (MEATGVLPFV…SGSKDPLARK (427 aa)). 16 LRR repeats span residues 7-32 (LPFV…VKAM), 33-55 (TSLR…LAAL), 56-78 (QKLE…LSSL), 80-103 (SLRA…IFKL), 104-126 (DDLS…LENA), 127-149 (KNML…LFIN), 150-173 (LTDL…MRRL), 175-196 (HLQT…QLPA), 197-222 (MMAL…LEGL), 223-245 (SNLS…LYTL), 247-268 (SLRR…IDQW), 269-291 (VHLE…ICKL), 293-316 (KLKK…IGKL), 317-339 (TSLE…LCRC), 340-363 (PKLK…HFLT), and 365-385 (IQVL…PADR). K21 carries the N6-acetyllysine modification. S406 bears the Phosphoserine mark. A Phosphoserine; by SGK3 modification is found at S436. The tract at residues 495–827 (VGQLPGLTIW…VVSRSLEGTE (333 aa)) is interaction with ACTL6A. 3 Gelsolin-like repeats span residues 509–591 (FVPV…EEFL), 629–703 (NIKL…PGFW), and 759–831 (LMPG…AQVF). S860 is subject to Phosphoserine. The segment at 951 to 977 (KTEDKEGKASAEAREGEEAAAEAEEKQ) is disordered. The segment covering 952 to 967 (TEDKEGKASAEAREGE) has biased composition (basic and acidic residues). Positions 968 to 977 (EAAAEAEEKQ) are enriched in acidic residues. Residues 1183-1256 (KCSDFCQDDL…VRKGNEQRAF (74 aa)) form a Gelsolin-like 4 repeat.

Interacts with actin, ACTL6A and NCOA2. Interacts with CARM1. Interacts with LRRFIP1, LRRFIP2 and MYD88. Upon LPS stimulation, LRRFIP2 competes for MYD88-binding; LRRFIP1 constitutively blocks the interaction with MyD88, even in the absence of LPS. Interacts with the nuclear receptors ESR1 and THRB. Interacts with SGK3. Interacts (via the gelsolin-like region) with TMOD1 and TMOD3. Interacts with LMOD2, VCL, GSN and DES. As to expression, expressed in blastocyst.

The protein localises to the nucleus. The protein resides in the cytoplasm. It is found in the cytoskeleton. Its subcellular location is the microtubule organizing center. It localises to the centrosome. The protein localises to the cell junction. The protein resides in the focal adhesion. It is found in the cell projection. Its subcellular location is the podosome. In terms of biological role, is a regulator of actin polymerization, required for proper myofibril organization and regulation of the length of sarcomeric thin filaments. It also plays a role in the assembly of cardiomyocyte cell adhesion complexes. Regulates cytoskeletal rearrangements involved in cytokinesis and cell migration, by inhibiting Rac1-dependent paxillin phosphorylation. May play a role as coactivator in transcriptional activation by hormone-activated nuclear receptors (NR) and acts in cooperation with NCOA2 and CARM1. Involved in estrogen hormone signaling. This is Protein flightless-1 homolog (Flii) from Mus musculus (Mouse).